A 275-amino-acid chain; its full sequence is Large ribosomal subunit protein uL2 (275 aa).

The tract at residues 224-257 (AMNPIDHPHGGGEGRTAAGRDPVSPWGTPTKGFR) is disordered.

The protein belongs to the universal ribosomal protein uL2 family. As to quaternary structure, part of the 50S ribosomal subunit. Forms a bridge to the 30S subunit in the 70S ribosome.

Its function is as follows. One of the primary rRNA binding proteins. Required for association of the 30S and 50S subunits to form the 70S ribosome, for tRNA binding and peptide bond formation. It has been suggested to have peptidyltransferase activity; this is somewhat controversial. Makes several contacts with the 16S rRNA in the 70S ribosome. This is Large ribosomal subunit protein uL2 from Burkholderia mallei (strain NCTC 10247).